A 499-amino-acid chain; its full sequence is Beta-amylase (499 aa).

Substrate is bound by residues D55, H95, and D103. E188 functions as the Proton donor in the catalytic mechanism. Positions 298, 303, and 345 each coordinate substrate. Residue E383 is the Proton acceptor of the active site. Residues N384–A385 and R423 contribute to the substrate site.

Belongs to the glycosyl hydrolase 14 family. In terms of assembly, homotetramer.

It catalyses the reaction Hydrolysis of (1-&gt;4)-alpha-D-glucosidic linkages in polysaccharides so as to remove successive maltose units from the non-reducing ends of the chains.. The polypeptide is Beta-amylase (BMY1) (Ipomoea batatas (Sweet potato)).